A 435-amino-acid polypeptide reads, in one-letter code: UDP-glucuronic acid decarboxylase 1 (435 aa).

The tract at residues 1–33 (MKQLHKQMSSKRDEETIPMSQSSPYSPKTLKHP) is disordered. At 1–48 (MKQLHKQMSSKRDEETIPMSQSSPYSPKTLKHPRSLPRSLHYLFREQR) the chain is on the cytoplasmic side. Residues 49–69 (LLFILVGILIGSTFFILQPSL) traverse the membrane as a helical; Signal-anchor for type II membrane protein segment. At 70 to 435 (SRLGAAESTS…ILNEDEGKGL (366 aa)) the chain is on the lumenal side. Residues 91-100 (DSPPSRSTFN) are compositionally biased toward polar residues. Residues 91 to 110 (DSPPSRSTFNSGGGGGRTGR) are disordered. 10 residues coordinate NAD(+): G129, F130, V131, D150, N151, F153, T154, G155, D175, and V176. I180 contacts UDP-alpha-D-glucuronate. L190 lines the NAD(+) pocket. K208 is a UDP-alpha-D-glucuronate binding site. NAD(+) is bound at residue T209. The UDP-alpha-D-glucuronate site is built by N216, G219, K222, and R223. The NAD(+) site is built by Y262 and K266. Y262 serves as the catalytic Proton acceptor. Y276 provides a ligand contact to UDP-alpha-D-glucuronate. NAD(+)-binding residues include T292 and R303. The interval 380–401 (EFKPNTADDPHKRKPDISKAKE) is disordered. Positions 385–401 (TADDPHKRKPDISKAKE) are enriched in basic and acidic residues.

This sequence belongs to the NAD(P)-dependent epimerase/dehydratase family. UDP-glucuronic acid decarboxylase subfamily. It depends on NAD(+) as a cofactor. As to expression, ubiquitous.

The protein localises to the golgi apparatus. It is found in the golgi stack membrane. It carries out the reaction UDP-alpha-D-glucuronate + H(+) = UDP-alpha-D-xylose + CO2. The protein operates within nucleotide-sugar biosynthesis; UDP-alpha-D-xylose biosynthesis; UDP-alpha-D-xylose from UDP-alpha-D-glucuronate: step 1/1. Catalyzes the NAD-dependent decarboxylation of UDP-glucuronic acid to UDP-xylose. Necessary for the biosynthesis of the core tetrasaccharide in glycosaminoglycan biosynthesis. The protein is UDP-glucuronic acid decarboxylase 1 of Arabidopsis thaliana (Mouse-ear cress).